Here is a 494-residue protein sequence, read N- to C-terminus: MAAKQTEPVTIISLRKLSQAAPEPQQKETKTFTVEDAVETIGFGRFHIALFLIMGSTGVVEAMEIMLIAVVSPVIRCEWQLENWQVAFVTTMVFFGYMVSSILFGLLADRYGRWKILLLSFLWGAYFSLLTSFSPSYIWFVFLRTMVGCGVSGHAQGLIIKTEFLPTKYRGYMLPLSQVFWLAGSLLIISMASVVIPTIGWRWLIRIASIPGIILIMAFKFIPESARFNVSTGNTQAALNTLESIAKMNRSVMPEGQLVEPILEKRGRFADLLDSKYLRTTLQIWIIWLGISFAYYGVILASAELLERDLVCGSKSESEPEVVETTGDSGEGLSPCYCHIFAPSDYRTMIISTLGEIALNPLNILGINFLGRRLSLSITMGCTALFFLLLNICTSSAGLIGFLFMLRALVAANFNTIYIYTAEVYPTPMRAIGMGTSGSLCRIGAMVAPFISQVLMSASFLGALCLFSSVCVVCAISAFTLPIETKGRALQQIK.

10 helical membrane-spanning segments follow: residues 48 to 68, 86 to 106, 121 to 141, 179 to 199, 203 to 223, 281 to 301, 350 to 370, 385 to 405, 431 to 451, and 460 to 480; these read IALF…IMLI, VAFV…LFGL, FLWG…IWFV, VFWL…IPTI, WLIR…KFIP, TLQI…VILA, IIST…INFL, LFFL…FLFM, AIGM…APFI, and FLGA…SAFT.

Belongs to the major facilitator superfamily.

It localises to the membrane. The sequence is that of Putative transporter SVOPL (Svopl) from Mus musculus (Mouse).